The primary structure comprises 442 residues: Terpene cyclase aneC (442 aa).

Mg(2+) contacts are provided by aspartate 196, asparagine 327, serine 331, and glutamate 335. Residues arginine 419 and tyrosine 420 each contribute to the (2E,6E)-farnesyl diphosphate site.

It belongs to the terpene synthase family. As to quaternary structure, homodimer. Mg(2+) serves as cofactor.

The catalysed reaction is (2E,6E)-farnesyl diphosphate = dauca-4,7-diene + diphosphate. Its pathway is secondary metabolite biosynthesis. In terms of biological role, terpene cyclase; part of the gene cluster that mediates the biosynthesis of aculenes, a unique type of norsesquiterpenes that contain a nordaucane skeleton linked to an L-proline moiety and are of mixed biosynthetic origin. The pathway begins with the synthesis of dauca-4,7-diene by the terpene cyclase aneC using farnesyl pyrophosphate (FPP) as substrate. The cytochrome P450 monooxygenase aneF then performs the initial oxidation at C-12 of dauca-4,7-diene to yield asperaculane D. Asperaculane D is substrate of the cytochrome P450 monooxygenase aneD for C-10 hydroxylation to yield asperaculane E. The cytochrome P450 monooxygenase aneG then converts asperaculane E into aculene D via C-2 oxidation. The monomodular nonribosomal peptide synthtase aneB adenylates L-proline and the thiohydrolase aneE transfers this activated L-proline derivative to aculenes D and C to produce respectively aculenes B and A. The dioxygenase aneA converts aculene D into aculene C, and aculene B into aculene A by introducing the 5,6-alkene moiety. Asperculanes A, B, C and F, as well as 14-prolyl asperculane C, might be shunt products of the pathway. The polypeptide is Terpene cyclase aneC (Aspergillus aculeatus (strain ATCC 16872 / CBS 172.66 / WB 5094)).